Reading from the N-terminus, the 614-residue chain is Probable LRR receptor-like serine/threonine-protein kinase At5g45780 (614 aa).

The first 26 residues, 1–26, serve as a signal peptide directing secretion; sequence MEISLMKFLFLGIWVYYYSVLDSVSA. Over 27 to 242 the chain is Extracellular; sequence MDSLLSPKGV…NSKHHSLVLS (216 aa). LRR repeat units follow at residues 104–126, 128–151, 152–174, and 176–197; these read HLHT…LGQL, ELET…GFLT, HLNY…VAGL, and GLSF…ISAK. N-linked (GlcNAc...) asparagine glycosylation is found at Asn-186, Asn-193, and Asn-224. A helical transmembrane segment spans residues 243 to 263; that stretch reads FAFGIVVAFIISLMFLFFWVL. Topologically, residues 264 to 614 are cytoplasmic; sequence WHRSRLSRSH…IEAIELSGPR (351 aa). Phosphothreonine is present on Thr-297. A Protein kinase domain is found at 300–576; sequence FSPKNILGQG…QVLKVLEGLV (277 aa). 306 to 314 is an ATP binding site; that stretch reads LGQGGFGMV. Thr-323 carries the phosphothreonine modification. Residue Lys-328 participates in ATP binding. The residue at position 380 (Ser-380) is a Phosphoserine. Catalysis depends on Asp-426, which acts as the Proton acceptor. Phosphothreonine is present on residues Thr-459, Thr-460, and Thr-465. Phosphotyrosine is present on Tyr-473. Ser-475 bears the Phosphoserine mark. The residue at position 476 (Thr-476) is a Phosphothreonine. Residue Ser-480 is modified to Phosphoserine. Thr-555 carries the phosphothreonine modification.

The protein belongs to the protein kinase superfamily. Ser/Thr protein kinase family.

The protein resides in the membrane. It carries out the reaction L-seryl-[protein] + ATP = O-phospho-L-seryl-[protein] + ADP + H(+). It catalyses the reaction L-threonyl-[protein] + ATP = O-phospho-L-threonyl-[protein] + ADP + H(+). This chain is Probable LRR receptor-like serine/threonine-protein kinase At5g45780, found in Arabidopsis thaliana (Mouse-ear cress).